Consider the following 424-residue polypeptide: UDP-glycosyltransferase 76H1 (424 aa).

Residues Ser248, 306 to 307 (WA), 324 to 332 (HCGWNSTIE), and 346 to 349 (FADQ) contribute to the UDP-alpha-D-glucose site.

This sequence belongs to the UDP-glycosyltransferase family.

Functionally, may glycosylate diterpenes or flavonols in leaves. The polypeptide is UDP-glycosyltransferase 76H1 (Stevia rebaudiana (Stevia)).